Reading from the N-terminus, the 764-residue chain is DNA-binding protein SATB1 (764 aa).

Over residues 1–15 (MDHLNEATQGKEHSE) the composition is skewed to basic and acidic residues. Residues 1 to 56 (MDHLNEATQGKEHSEMSNNVSDPKGPPAKIARLEQNGSPLGRGRLGSTGGKMQGVP) form a disordered region. The Nuclear localization signal signature appears at 20–40 (VSDPKGPPAKIARLEQNGSPL). A compositionally biased stretch (gly residues) spans 43 to 52 (GRLGSTGGKM). Residue K51 forms a Glycyl lysine isopeptide (Lys-Gly) (interchain with G-Cter in SUMO2) linkage. A CMP domain is found at 71–172 (GTMLPVFCVV…VVTLKIQLHS (102 aa)). K136 carries the post-translational modification N6-acetyllysine. Residues 139–143 (PVPLS) carry the Protein interaction motif. The 74-residue stretch at 175–248 (KLEDLPPEQW…WYKHFKKTKD (74 aa)) folds into the CUTL domain. Residue S185 is modified to Phosphoserine. The nuclear matrix targeting sequence (NMTS) stretch occupies residues 224 to 278 (YYANVSAAKCQEFGRWYKHFKKTKDMMVEMDSLSELSQQGANHVNFGQQPVPGNT). A Nuclear matrix targeting sequence (NMTS) motif is present at residues 224–278 (YYANVSAAKCQEFGRWYKHFKKTKDMMVEMDSLSELSQQGANHVNFGQQPVPGNT). Residues 266–296 (HVNFGQQPVPGNTAEQPPSPAQLSHGSQPSV) are compositionally biased toward polar residues. The interval 266–307 (HVNFGQQPVPGNTAEQPPSPAQLSHGSQPSVRTPLPNLHPGL) is disordered. Positions 361-448 (LEQQVSTNTE…ERDRIYQDER (88 aa)) form a DNA-binding region, CUT 1. DNA-binding positions include Q390, 400-410 (RTQGLLSEILR), and N425. Positions 450–474 (RSLNAASAMGPAPLLSTPPSRPPQV) are disordered. A DNA-binding region (CUT 2) is located at residues 484–571 (NGKPENNTMN…ERDAIYEQES (88 aa)). A disordered region spans residues 591-650 (QIQQQQQQQQQQQQQQQPPPPPPQPQPQPQAGPRLPPRQPTVASSAESDEENRQKTRPRT). Positions 593 to 606 (QQQQQQQQQQQQQQ) are enriched in low complexity. The segment covering 607–629 (QPPPPPPQPQPQPQAGPRLPPRQ) has biased composition (pro residues). The residue at position 638 (S638) is a Phosphoserine. The segment at residues 646-705 (TRPRTKISVEALGILQSFIQDVGLYPDEEAIQTLSAQLDLPKYTIIKFFQNQRYYLKHHG) is a DNA-binding region (homeobox). A Glycyl lysine isopeptide (Lys-Gly) (interchain with G-Cter in SUMO) cross-link involves residue K745.

It belongs to the CUT homeobox family. As to quaternary structure, interacts with PCAF. Interacts with sumoylated PML and HDAC1 Tat via the CMP domain. Also interacts with DYNLT3 and POLR2J2. Binds to EP300. Homodimer. Part of the nuclear protein complex gamma-globin promoter and enhancer binding factor (gamma-PE) composed at least of SATB1 and HOXB2. Interaction with CtBP1 when not acetylated stabilizes attachment to DNA and promotes transcription repression. Interacts with CUX1 (via DNA-binding domains); the interaction inhibits the attachment of both proteins to DNA. In terms of processing, sumoylated. Sumoylation promotes cleavage by caspases. Post-translationally, phosphorylated by PKC. Acetylated by PCAF. Phosphorylated form interacts with HDAC1, but unphosphorylated form interacts with PCAF. DNA binding properties are activated by phosphorylation and inactivated by acetylation. In opposition, gene expression is down-regulated by phosphorylation but up-regulated by acetylation. Cleaved at Asp-254 by caspase-3 and caspase-6 during T-cell apoptosis in thymus and during B-cell stimulation. The cleaved forms cannot dimerize and lose transcription regulation function because of impaired DNA and chromatin association. As to expression, expressed in the subventricular zone, rostral migratory stream and in the olfactory bulb (at protein level). Mainly expressed in thymus, spleen, and lymph nodes with a lower level observed in the brain.

Its subcellular location is the nucleus. The protein localises to the PML body. Functionally, required for the switching of fetal globin species, and beta- and gamma-globin genes regulation during erythroid differentiation. Plays a role in chromatin organization and nuclear architecture during apoptosis. Crucial silencing factor contributing to the initiation of X inactivation mediated by Xist RNA that occurs during embryogenesis and in lymphoma. Binds to DNA at special AT-rich sequences, the consensus SATB1-binding sequence (CSBS), at nuclear matrix- or scaffold-associated regions. Thought to recognize the sugar-phosphate structure of double-stranded DNA. Transcriptional repressor controlling nuclear and viral gene expression in a phosphorylated and acetylated status-dependent manner, by binding to matrix attachment regions (MARs) of DNA and inducing a local chromatin-loop remodeling. Acts as a docking site for several chromatin remodeling enzymes and also by recruiting corepressors (HDACs) or coactivators (HATs) directly to promoters and enhancers. Modulates genes that are essential in the maturation of the immune T-cell CD8SP from thymocytes. Promotes neuronal differentiation of neural stem/progenitor cells in the adult subventricular zone, possibly by positively regulating the expression of NEUROD1. The sequence is that of DNA-binding protein SATB1 (Satb1) from Mus musculus (Mouse).